We begin with the raw amino-acid sequence, 257 residues long: Imidazole glycerol phosphate synthase subunit HisF (257 aa).

Residues D11 and D130 contribute to the active site.

The protein belongs to the HisA/HisF family. Heterodimer of HisH and HisF.

The protein resides in the cytoplasm. The catalysed reaction is 5-[(5-phospho-1-deoxy-D-ribulos-1-ylimino)methylamino]-1-(5-phospho-beta-D-ribosyl)imidazole-4-carboxamide + L-glutamine = D-erythro-1-(imidazol-4-yl)glycerol 3-phosphate + 5-amino-1-(5-phospho-beta-D-ribosyl)imidazole-4-carboxamide + L-glutamate + H(+). It functions in the pathway amino-acid biosynthesis; L-histidine biosynthesis; L-histidine from 5-phospho-alpha-D-ribose 1-diphosphate: step 5/9. Its function is as follows. IGPS catalyzes the conversion of PRFAR and glutamine to IGP, AICAR and glutamate. The HisF subunit catalyzes the cyclization activity that produces IGP and AICAR from PRFAR using the ammonia provided by the HisH subunit. The chain is Imidazole glycerol phosphate synthase subunit HisF from Shewanella sp. (strain ANA-3).